A 460-amino-acid chain; its full sequence is Serine--tRNA ligase (460 aa).

Basic and acidic residues predominate over residues 50–65; that stretch reads DRNEVSSKIGELKQAG. Disordered regions lie at residues 50–71 and 109–129; these read DRNEVSSKIGELKQAGDEDAAQ and PDEDAPVGDSEAENVERRREG. A compositionally biased stretch (acidic residues) spans 109–121; it reads PDEDAPVGDSEAE. 241 to 243 provides a ligand contact to L-serine; the sequence is TAE. ATP-binding positions include 272–274 and valine 288; that span reads RRE. Residue glutamate 295 coordinates L-serine. 368 to 371 provides a ligand contact to ATP; it reads EVSS. An L-serine-binding site is contributed by serine 404.

The protein belongs to the class-II aminoacyl-tRNA synthetase family. Type-1 seryl-tRNA synthetase subfamily. As to quaternary structure, homodimer. The tRNA molecule binds across the dimer.

Its subcellular location is the cytoplasm. It catalyses the reaction tRNA(Ser) + L-serine + ATP = L-seryl-tRNA(Ser) + AMP + diphosphate + H(+). The enzyme catalyses tRNA(Sec) + L-serine + ATP = L-seryl-tRNA(Sec) + AMP + diphosphate + H(+). It participates in aminoacyl-tRNA biosynthesis; selenocysteinyl-tRNA(Sec) biosynthesis; L-seryl-tRNA(Sec) from L-serine and tRNA(Sec): step 1/1. Functionally, catalyzes the attachment of serine to tRNA(Ser). Is also able to aminoacylate tRNA(Sec) with serine, to form the misacylated tRNA L-seryl-tRNA(Sec), which will be further converted into selenocysteinyl-tRNA(Sec). The polypeptide is Serine--tRNA ligase (Halobacterium salinarum (strain ATCC 29341 / DSM 671 / R1)).